Reading from the N-terminus, the 360-residue chain is MKPSIVAKLEALHERHEEVQALLGDAQTIADQERFRALSREYAQLSDVSRCFTDWQQVQEDIETAQMMLDDPEMREMAQDELREAKEKSEQLEQQLHVLLLPKDPDDERNAFLEVRAGTGGDEAALFAGDLFRMYSRYAEARRWRVEIMSASEGEHGGYKEIIAKISGDGVYGRLKFESGGHRVQRVPATESQGRIHTSACTVAVMPELPDAELPDINPADLRIDTFRSSGAGGQHVNTTDSAIRITHLPTGIVVECQDERSQHKNKAKALSVLGARIHAAEMAKRQQAEASTRRNLLGSGDRSDRNRTYNFPQGRVTDHRINLTLYRLDEVMEGKLDMLIEPIIQEHQADQLAALSEQE.

The residue at position 235 (Q235) is an N5-methylglutamine. A disordered region spans residues 284–313; that stretch reads AKRQQAEASTRRNLLGSGDRSDRNRTYNFP.

This sequence belongs to the prokaryotic/mitochondrial release factor family. Methylated by PrmC. Methylation increases the termination efficiency of RF1.

It localises to the cytoplasm. In terms of biological role, peptide chain release factor 1 directs the termination of translation in response to the peptide chain termination codons UAG and UAA. The chain is Peptide chain release factor 1 from Escherichia coli O127:H6 (strain E2348/69 / EPEC).